The chain runs to 573 residues: Probable pectinesterase/pectinesterase inhibitor 41 (573 aa).

A signal peptide spans 1–22 (MLSLKLFLVTLFLSLQTLFIAS). The tract at residues 25-184 (LLPSNSSSTI…TKLFSVSLAL (160 aa)) is pectinesterase inhibitor 41. N-linked (GlcNAc...) asparagine glycans are attached at residues Asn-29, Asn-119, Asn-173, Asn-264, Asn-268, Asn-281, and Asn-320. Residues 259-557 (VTVNQNGTGN…FTVENFLLGD (299 aa)) form a pectinesterase 41 region. Thr-336 is a binding site for substrate. Asn-353 carries N-linked (GlcNAc...) asparagine glycosylation. Substrate is bound at residue Gln-366. The Proton donor; for pectinesterase activity role is filled by Asp-389. A disulfide bond links Cys-403 and Cys-423. Asp-410 acts as the Nucleophile; for pectinesterase activity in catalysis. Asn-456 and Asn-469 each carry an N-linked (GlcNAc...) asparagine glycan. Residues Arg-478 and Trp-480 each coordinate substrate. Residues Asn-520, Asn-541, and Asn-547 are each glycosylated (N-linked (GlcNAc...) asparagine).

In the N-terminal section; belongs to the PMEI family. The protein in the C-terminal section; belongs to the pectinesterase family. Expressed in flowers, siliques, floral stems and rosettes leaves.

Its subcellular location is the secreted. It is found in the cell wall. It carries out the reaction [(1-&gt;4)-alpha-D-galacturonosyl methyl ester](n) + n H2O = [(1-&gt;4)-alpha-D-galacturonosyl](n) + n methanol + n H(+). The protein operates within glycan metabolism; pectin degradation; 2-dehydro-3-deoxy-D-gluconate from pectin: step 1/5. Its function is as follows. Acts in the modification of cell walls via demethylesterification of cell wall pectin. This is Probable pectinesterase/pectinesterase inhibitor 41 (PME41) from Arabidopsis thaliana (Mouse-ear cress).